Here is a 149-residue protein sequence, read N- to C-terminus: NADH-quinone oxidoreductase subunit A (149 aa).

3 consecutive transmembrane segments (helical) span residues 16–36 (FGIFLIVAIGLCCLMLVGAWF), 68–88 (FYLVAMFFVIFDVEALYLFAW), and 98–118 (LGFIEAAIFILVLLAGLVYLV).

It belongs to the complex I subunit 3 family. In terms of assembly, NDH-1 is composed of 13 different subunits. Subunits NuoA, H, J, K, L, M, N constitute the membrane sector of the complex.

The protein resides in the cell inner membrane. The enzyme catalyses a quinone + NADH + 5 H(+)(in) = a quinol + NAD(+) + 4 H(+)(out). In terms of biological role, NDH-1 shuttles electrons from NADH, via FMN and iron-sulfur (Fe-S) centers, to quinones in the respiratory chain. The immediate electron acceptor for the enzyme in this species is believed to be ubiquinone. Couples the redox reaction to proton translocation (for every two electrons transferred, four hydrogen ions are translocated across the cytoplasmic membrane), and thus conserves the redox energy in a proton gradient. This Cronobacter sakazakii (strain ATCC BAA-894) (Enterobacter sakazakii) protein is NADH-quinone oxidoreductase subunit A.